We begin with the raw amino-acid sequence, 160 residues long: Salivary gland broad-spectrum antiviral protein (160 aa).

Residues 17–37 form a helical membrane-spanning segment; it reads VALGLYFTVVVFVLFITSVNL. Residues Asn-62 and Asn-145 are each glycosylated (N-linked (GlcNAc...) asparagine).

Salivary gland (at protein level).

It localises to the membrane. Functionally, (Microbial infection) Modulates replication of Zika virus in salivary glands. (Microbial infection) Modulates replication of dengue virus type 2 in salivary glands. In terms of biological role, (Microbial infection) Modulates replication of chikungunya virus in salivary glands. The protein is Salivary gland broad-spectrum antiviral protein of Aedes aegypti (Yellowfever mosquito).